Here is a 331-residue protein sequence, read N- to C-terminus: Ornithine carbamoyltransferase (331 aa).

Residues S55–T58, Q82, R106, and H133–Q136 each bind carbamoyl phosphate. Residues N166, D230, and S234 to M235 each bind L-ornithine. Carbamoyl phosphate contacts are provided by residues C272–L273 and R317.

It belongs to the aspartate/ornithine carbamoyltransferase superfamily. OTCase family.

The protein localises to the cytoplasm. It carries out the reaction carbamoyl phosphate + L-ornithine = L-citrulline + phosphate + H(+). It functions in the pathway amino-acid biosynthesis; L-arginine biosynthesis; L-arginine from L-ornithine and carbamoyl phosphate: step 1/3. In terms of biological role, reversibly catalyzes the transfer of the carbamoyl group from carbamoyl phosphate (CP) to the N(epsilon) atom of ornithine (ORN) to produce L-citrulline. The sequence is that of Ornithine carbamoyltransferase (argF) from Neisseria meningitidis serogroup A / serotype 4A (strain DSM 15465 / Z2491).